We begin with the raw amino-acid sequence, 121 residues long: Type II secretion system protein I (121 aa).

Residues 1–6 (MKKQSG) constitute a propeptide, leader sequence. At Met7 the chain carries N-methylmethionine. The helical transmembrane segment at 7–27 (MTLIEVMVALVVFALAGLAVM) threads the bilayer.

The protein belongs to the GSP I family. In terms of assembly, type II secretion is composed of four main components: the outer membrane complex, the inner membrane complex, the cytoplasmic secretion ATPase and the periplasm-spanning pseudopilus. Interacts with core component PulG. Cleaved by prepilin peptidase. Post-translationally, methylated by prepilin peptidase at the amino group of the N-terminal methionine once the leader sequence is cleaved by prepilin peptidase.

Its subcellular location is the cell inner membrane. Its function is as follows. Component of the type II secretion system required for the energy-dependent secretion of extracellular factors such as proteases and toxins from the periplasm. Part of the pseudopilus tip complex that is critical for the recognition and binding of secretion substrates. The polypeptide is Type II secretion system protein I (pulI) (Klebsiella pneumoniae).